The sequence spans 427 residues: Histidine--tRNA ligase (427 aa).

The protein belongs to the class-II aminoacyl-tRNA synthetase family. Homodimer.

The protein resides in the cytoplasm. It catalyses the reaction tRNA(His) + L-histidine + ATP = L-histidyl-tRNA(His) + AMP + diphosphate + H(+). The sequence is that of Histidine--tRNA ligase from Deinococcus radiodurans (strain ATCC 13939 / DSM 20539 / JCM 16871 / CCUG 27074 / LMG 4051 / NBRC 15346 / NCIMB 9279 / VKM B-1422 / R1).